The following is a 234-amino-acid chain: DNA repair protein RecO (234 aa).

This sequence belongs to the RecO family.

Involved in DNA repair and RecF pathway recombination. This is DNA repair protein RecO from Alteromonas mediterranea (strain DSM 17117 / CIP 110805 / LMG 28347 / Deep ecotype).